The following is a 661-amino-acid chain: Altered inheritance of mitochondria protein 3-1 (661 aa).

Disordered stretches follow at residues 19 to 99, 116 to 142, 154 to 194, 263 to 419, 431 to 473, 487 to 563, and 615 to 661; these read TKTV…YSGY, AQNTPYSSPAQQQPVSPQPPVQNSQYN, QPAG…TFQS, LPQQ…DSSS, RNIP…SPGI, YAGH…RKDN, and EAAT…FVHS. Basic and acidic residues predominate over residues 37–58; sequence KDKDTHHTDHHEEDEYSEDYHT. Low complexity predominate over residues 120 to 142; that stretch reads PYSSPAQQQPVSPQPPVQNSQYN. Residues 263-318 are compositionally biased toward low complexity; that stretch reads LPQQQQQQQQQPEYNTQLQQNQQLHNQQAYGQQQQIYSNNTQPQYVSQTQQTSYTQ. 2 stretches are compositionally biased toward polar residues: residues 319 to 328 and 356 to 371; these read NAPPQQTRSP and VNQTAITSTNSANEAL. Residues 390-399 show a composition bias toward basic and acidic residues; it reads THRDRGRASV. The span at 406 to 419 shows a compositional bias: polar residues; sequence ENMQTNNSTIDSSS. Low complexity predominate over residues 434 to 447; that stretch reads PAPAVGPPGAATRA. Composition is skewed to polar residues over residues 458 to 473, 512 to 533, and 541 to 552; these read SQSMSTNSVVETSPGI, RSTSTKMNTQPNPQTPISPSRD, and RSTVSSIQSSNR.

Belongs to the AIM3 family.

It is found in the membrane raft. The polypeptide is Altered inheritance of mitochondria protein 3-1 (AIM3-1) (Candida glabrata (strain ATCC 2001 / BCRC 20586 / JCM 3761 / NBRC 0622 / NRRL Y-65 / CBS 138) (Yeast)).